A 308-amino-acid polypeptide reads, in one-letter code: uncharacterized protein (308 aa).

Residues 212 to 242 (EADKMTIDYMRELDNLQRQYDGLVDEDKALH) are a coiled coil.

This is an uncharacterized protein from Ostreid herpesvirus 1 (isolate France) (OsHV-1).